A 334-amino-acid chain; its full sequence is MATIKDVAKMAGVSTTTVSHVINKTRFVAAETEKLVLQAIQELNYSPSAVARSLKVNTTKSIGMIVTSSEAPYFAEIIHAVEEHCYRQGYSLFLCNTQNNVEKIKNHLEMLIKKRVDGILVMCAEYTQDSLDLLANFTSLPLVVMDWGPDNKHTDIIQDHSFEGGYLATKYLIDHGHKDIGIIAGELTKTTAKTRYEGFIKAMNEAGLKINPDWVMEGFFEPEDGYECMNKILAQDTLPTAVFCCNDVMALGAISAIGEKGLRVPEDISIIGYDNIHASRFYSPPLTTIHQSKSRLGARAVTLLFERINEKSEERAVIEMHPELVIRKSVKSRL.

In terms of domain architecture, HTH lacI-type spans 2–56 (ATIKDVAKMAGVSTTTVSHVINKTRFVAAETEKLVLQAIQELNYSPSAVARSLKV). Positions 4-23 (IKDVAKMAGVSTTTVSHVIN) form a DNA-binding region, H-T-H motif. A DNA-binding region spans residues 48–56 (SAVARSLKV). 5 residues coordinate hypoxanthine: Tyr-73, Lys-189, Thr-191, Phe-220, and Asp-274.

In terms of assembly, homodimer.

The protein operates within purine metabolism; purine nucleotide biosynthesis [regulation]. Its function is as follows. Is the main repressor of the genes involved in the de novo synthesis of purine nucleotides, regulating purB, purC, purEK, purF, purHD, purL, purMN and guaBA expression. PurR is allosterically activated to bind its cognate DNA by binding the purine corepressors, hypoxanthine or guanine, thereby effecting transcription repression. In Pasteurella multocida (strain Pm70), this protein is HTH-type transcriptional repressor PurR.